A 132-amino-acid chain; its full sequence is Phosphoribosyl-AMP cyclohydrolase (132 aa).

Residue Asp81 participates in Mg(2+) binding. Cys82 lines the Zn(2+) pocket. Mg(2+) is bound by residues Asp83 and Asp85. Residues Cys99 and Cys106 each contribute to the Zn(2+) site.

The protein belongs to the PRA-CH family. In terms of assembly, homodimer. The cofactor is Mg(2+). Requires Zn(2+) as cofactor.

The protein localises to the cytoplasm. The enzyme catalyses 1-(5-phospho-beta-D-ribosyl)-5'-AMP + H2O = 1-(5-phospho-beta-D-ribosyl)-5-[(5-phospho-beta-D-ribosylamino)methylideneamino]imidazole-4-carboxamide. It participates in amino-acid biosynthesis; L-histidine biosynthesis; L-histidine from 5-phospho-alpha-D-ribose 1-diphosphate: step 3/9. In terms of biological role, catalyzes the hydrolysis of the adenine ring of phosphoribosyl-AMP. This chain is Phosphoribosyl-AMP cyclohydrolase, found in Chromobacterium violaceum (strain ATCC 12472 / DSM 30191 / JCM 1249 / CCUG 213 / NBRC 12614 / NCIMB 9131 / NCTC 9757 / MK).